A 412-amino-acid polypeptide reads, in one-letter code: Nuclear hormone receptor family member nhr-61 (412 aa).

Residues 1–19 (MIVDSISSSTASTSSSSPT) show a composition bias toward low complexity. The tract at residues 1-23 (MIVDSISSSTASTSSSSPTRGTP) is disordered. The nuclear receptor DNA-binding region spans 27–102 (SLQCAVCGDV…VGMNPRAVQG (76 aa)). 2 NR C4-type zinc fingers span residues 30–50 (CAVC…CNGC) and 66–90 (CRHG…LTRC). Residues 144-407 (KKEQIIDNLR…DWSQELRDHR (264 aa)) form the NR LBD domain.

This sequence belongs to the nuclear hormone receptor family.

It localises to the nucleus. Orphan nuclear receptor. In Caenorhabditis elegans, this protein is Nuclear hormone receptor family member nhr-61 (nhr-61).